We begin with the raw amino-acid sequence, 172 residues long: Peptide deformylase 1 (172 aa).

Residues cysteine 91 and histidine 133 each coordinate Fe cation. Glutamate 134 is an active-site residue. Histidine 137 is a Fe cation binding site.

Belongs to the polypeptide deformylase family. The cofactor is Fe(2+).

The enzyme catalyses N-terminal N-formyl-L-methionyl-[peptide] + H2O = N-terminal L-methionyl-[peptide] + formate. Its function is as follows. Removes the formyl group from the N-terminal Met of newly synthesized proteins. Requires at least a dipeptide for an efficient rate of reaction. N-terminal L-methionine is a prerequisite for activity but the enzyme has broad specificity at other positions. This Vibrio parahaemolyticus serotype O3:K6 (strain RIMD 2210633) protein is Peptide deformylase 1.